A 321-amino-acid chain; its full sequence is Lipoyl synthase (321 aa).

Residues C68, C73, C79, C94, C98, C101, and S308 each contribute to the [4Fe-4S] cluster site. A Radical SAM core domain is found at 80–297 (FNHGTATFMI…KAEALAMGFT (218 aa)).

It belongs to the radical SAM superfamily. Lipoyl synthase family. Requires [4Fe-4S] cluster as cofactor.

The protein localises to the cytoplasm. The catalysed reaction is [[Fe-S] cluster scaffold protein carrying a second [4Fe-4S](2+) cluster] + N(6)-octanoyl-L-lysyl-[protein] + 2 oxidized [2Fe-2S]-[ferredoxin] + 2 S-adenosyl-L-methionine + 4 H(+) = [[Fe-S] cluster scaffold protein] + N(6)-[(R)-dihydrolipoyl]-L-lysyl-[protein] + 4 Fe(3+) + 2 hydrogen sulfide + 2 5'-deoxyadenosine + 2 L-methionine + 2 reduced [2Fe-2S]-[ferredoxin]. Its pathway is protein modification; protein lipoylation via endogenous pathway; protein N(6)-(lipoyl)lysine from octanoyl-[acyl-carrier-protein]: step 2/2. Catalyzes the radical-mediated insertion of two sulfur atoms into the C-6 and C-8 positions of the octanoyl moiety bound to the lipoyl domains of lipoate-dependent enzymes, thereby converting the octanoylated domains into lipoylated derivatives. This chain is Lipoyl synthase, found in Salmonella paratyphi A (strain AKU_12601).